We begin with the raw amino-acid sequence, 731 residues long: Alpha-1,4-glucan:maltose-1-phosphate maltosyltransferase (731 aa).

Residues 1–10 (MEAQHNETEA) show a composition bias toward basic and acidic residues. A disordered region spans residues 1-31 (MEAQHNETEAAGKPAAKKTTRTRKPRASKQA). A compositionally biased stretch (basic residues) spans 15–27 (AAKKTTRTRKPRA). 3 residues coordinate alpha-maltose 1-phosphate: K321, Q381, and D416. The Nucleophile role is filled by D451. N452 is a binding site for alpha-maltose 1-phosphate. E480 functions as the Proton donor in the catalytic mechanism. 590-591 (KF) provides a ligand contact to alpha-maltose 1-phosphate.

This sequence belongs to the glycosyl hydrolase 13 family. GlgE subfamily. In terms of assembly, homodimer.

The catalysed reaction is alpha-maltose 1-phosphate + [(1-&gt;4)-alpha-D-glucosyl](n) = [(1-&gt;4)-alpha-D-glucosyl](n+2) + phosphate. Functionally, maltosyltransferase that uses maltose 1-phosphate (M1P) as the sugar donor to elongate linear or branched alpha-(1-&gt;4)-glucans. Is involved in a branched alpha-glucan biosynthetic pathway from trehalose, together with TreS, Mak and GlgB. The protein is Alpha-1,4-glucan:maltose-1-phosphate maltosyltransferase of Bifidobacterium animalis subsp. lactis (strain Bl-04 / DGCC2908 / RB 4825 / SD5219).